A 931-amino-acid polypeptide reads, in one-letter code: Netrin receptor UNC5C (931 aa).

A signal peptide spans 1-40; that stretch reads MRKGLRATAARCGLGLGYLLQMLVLPALALLSASGTGSAA. The Extracellular segment spans residues 41-380; that stretch reads QDDEFFHELP…APDSDDVALY (340 aa). In terms of domain architecture, Ig-like spans 62–159; that stretch reads PHFLIEPEEA…AGTTKSRKAY (98 aa). 9 disulfide bridges follow: C83–C144, C95–C142, C188–C239, C272–C309, C276–C313, C287–C299, C328–C362, C332–C367, and C340–C352. Residues 161-256 form the Ig-like C2-type domain; it reads RIAYLRKTFE…KRKSTTATVI (96 aa). The N-linked (GlcNAc...) asparagine glycan is linked to N236. TSP type-1 domains lie at 260–314 and 316–368; these read NGGW…TLCP and DGRW…GLCM. A glycan (N-linked (GlcNAc...) asparagine) is linked at N361. The helical transmembrane segment at 381–401 threads the bilayer; the sequence is VGIVIAVTVCLAITVVVALFV. The Cytoplasmic segment spans residues 402–931; the sequence is YRKNHRDFES…VVSLAAEGQY (530 aa). The segment at 402–931 is required for netrin-mediated axon repulsion of neuronal growth cones; the sequence is YRKNHRDFES…VVSLAAEGQY (530 aa). The residue at position 502 (S502) is a Phosphoserine. Positions 530–673 constitute a ZU5 domain; sequence CTAFGTFNSL…LSTYALVGQS (144 aa). The residue at position 568 (Y568) is a Phosphotyrosine. The interval 694–712 is interaction with DCC; it reads SLEYSIRVYCLDDTQDALK. Residues 850 to 929 form the Death domain; that stretch reads QKLCSSLDAP…ETVVSLAAEG (80 aa).

It belongs to the unc-5 family. As to quaternary structure, interacts with DCC (via cytoplasmic domain). Interacts (tyrosine phosphorylated form) with PTPN11. Interacts (via extracellular domain) with FLRT3 (via extracellular domain). Interacts (via Ig-like C2-type domain) with DSCAM (via extracellular domain). Interacts (via death domain) with DAPK1. Interacts (via cytoplasmic domain) with TUBB3; this interaction is decreased by NTN1/Netrin-1. Post-translationally, phosphorylated on different cytoplasmic tyrosine residues. Phosphorylation of Tyr-568 leads to an interaction with PTPN11 phosphatase, suggesting that its activity is regulated by phosphorylation/dephosphorylation. Tyrosine phosphorylation is netrin-dependent. Proteolytically cleaved by caspases during apoptosis. The cleavage does not take place when the receptor is associated with netrin ligand. Its cleavage by caspases is required to induce apoptosis. As to expression, expressed in cortical and cerebellar neurons, including cells of the external and internal granular layer and of the Purkinje cell layer (at protein level). Mainly expressed in regions of differentiating neurons. Highly expressed in brain and lung. Expressed in the cerebellum and the neurons of the hippocampus, with enrichment in neurons of the CA3 hippocampal pyramidal layer. Weakly expressed in testis, ovary, spleen, thymus and bladder. Expressed at very low level in kidney, intestine and salivary gland.

It localises to the cell membrane. It is found in the cell surface. The protein resides in the synapse. The protein localises to the synaptosome. Its subcellular location is the cell projection. It localises to the dendrite. It is found in the axon. The protein resides in the growth cone. The protein localises to the lamellipodium. Its subcellular location is the filopodium. Its function is as follows. Receptor for netrin required for axon guidance. Mediates axon repulsion of neuronal growth cones in the developing nervous system upon ligand binding. NTN1/Netrin-1 binding might cause dissociation of UNC5C from polymerized TUBB3 in microtubules and thereby lead to increased microtubule dynamics and axon repulsion. Axon repulsion in growth cones may also be caused by its association with DCC that may trigger signaling for repulsion. Might also collaborate with DSCAM in NTN1-mediated axon repulsion independently of DCC. Also involved in corticospinal tract axon guidance independently of DCC. Involved in dorsal root ganglion axon projection towards the spinal cord. It also acts as a dependence receptor required for apoptosis induction when not associated with netrin ligand. This Mus musculus (Mouse) protein is Netrin receptor UNC5C (Unc5c).